Reading from the N-terminus, the 149-residue chain is Large ribosomal subunit protein uL16c (149 aa).

Belongs to the universal ribosomal protein uL16 family. Part of the 50S ribosomal subunit.

It localises to the plastid. Its subcellular location is the organellar chromatophore. The sequence is that of Large ribosomal subunit protein uL16c (rpl16) from Paulinella chromatophora.